A 642-amino-acid chain; its full sequence is 1-deoxy-D-xylulose-5-phosphate synthase (642 aa).

Thiamine diphosphate is bound by residues His-79 and 120 to 122; that span reads GHS. A Mg(2+)-binding site is contributed by Asp-151. Thiamine diphosphate-binding positions include 152–153, Asn-180, Tyr-290, and Glu-372; that span reads GS. Asn-180 is a binding site for Mg(2+).

This sequence belongs to the transketolase family. DXPS subfamily. As to quaternary structure, homodimer. Requires Mg(2+) as cofactor. It depends on thiamine diphosphate as a cofactor.

It carries out the reaction D-glyceraldehyde 3-phosphate + pyruvate + H(+) = 1-deoxy-D-xylulose 5-phosphate + CO2. The protein operates within metabolic intermediate biosynthesis; 1-deoxy-D-xylulose 5-phosphate biosynthesis; 1-deoxy-D-xylulose 5-phosphate from D-glyceraldehyde 3-phosphate and pyruvate: step 1/1. In terms of biological role, catalyzes the acyloin condensation reaction between C atoms 2 and 3 of pyruvate and glyceraldehyde 3-phosphate to yield 1-deoxy-D-xylulose-5-phosphate (DXP). The protein is 1-deoxy-D-xylulose-5-phosphate synthase of Rhodospirillum centenum (strain ATCC 51521 / SW).